Consider the following 249-residue polypeptide: 4-hydroxy-tetrahydrodipicolinate reductase (249 aa).

Residues 8-13 (GVTGQM), 87-89 (GTT), and 111-114 (ATNF) each bind NAD(+). H143 acts as the Proton donor/acceptor in catalysis. H144 contributes to the (S)-2,3,4,5-tetrahydrodipicolinate binding site. K147 acts as the Proton donor in catalysis. 153-154 (GT) contacts (S)-2,3,4,5-tetrahydrodipicolinate.

This sequence belongs to the DapB family.

Its subcellular location is the cytoplasm. It catalyses the reaction (S)-2,3,4,5-tetrahydrodipicolinate + NAD(+) + H2O = (2S,4S)-4-hydroxy-2,3,4,5-tetrahydrodipicolinate + NADH + H(+). The catalysed reaction is (S)-2,3,4,5-tetrahydrodipicolinate + NADP(+) + H2O = (2S,4S)-4-hydroxy-2,3,4,5-tetrahydrodipicolinate + NADPH + H(+). Its pathway is amino-acid biosynthesis; L-lysine biosynthesis via DAP pathway; (S)-tetrahydrodipicolinate from L-aspartate: step 4/4. Catalyzes the conversion of 4-hydroxy-tetrahydrodipicolinate (HTPA) to tetrahydrodipicolinate. This Haloarcula marismortui (strain ATCC 43049 / DSM 3752 / JCM 8966 / VKM B-1809) (Halobacterium marismortui) protein is 4-hydroxy-tetrahydrodipicolinate reductase.